We begin with the raw amino-acid sequence, 432 residues long: Calcium uptake protein 2, mitochondrial (432 aa).

Residues 1 to 22 (MAAAAGRSAWLAAWGGRLRRGL) constitute a mitochondrion transit peptide. In terms of domain architecture, EF-hand 1 spans 169 to 204 (KPHSGFHVAFKMLDVDGNEMIERKEFVKLQKIISKQ). Residues Asp-182, Asp-184, Asn-186, Met-188, Glu-190, and Glu-193 each contribute to the Ca(2+) site. Ser-202 carries the post-translational modification Phosphoserine. An EF-hand 2; degenerate domain is found at 224 to 259 (EPGVNTTLQVRFFGKRGEKKLHYKEFRRFMENLQTE). Positions 290–325 (TENKDIYWRNVREKLSVGESISLDEFKSFCHFTTHL) constitute an EF-hand 3; degenerate domain. One can recognise an EF-hand 4 domain in the interval 359–394 (LSDNLLDTVFKIFDLDGDECLSHGEFLGVLKNRMHR). Residues Asp-372, Asp-374, Asp-376, Cys-378, and Glu-383 each coordinate Ca(2+).

The protein belongs to the MICU1 family. MICU2 subfamily. In terms of assembly, heterodimer; disulfide-linked; heterodimerizes with MICU1. Component of the uniplex complex, composed of MCU, EMRE/SMDT1, MICU1 and MICU2 in a 4:4:1:1 stoichiometry. In terms of tissue distribution, predominantly expressed in stomach, intestine, skeletal muscle, kidney, heart, testis, prostate and uterus.

The protein resides in the mitochondrion intermembrane space. It is found in the mitochondrion inner membrane. Calcium sensor of the mitochondrial calcium uniporter (MCU) channel, which senses calcium level via its EF-hand domains. MICU1 and MICU2 form a disulfide-linked heterodimer that stimulates and inhibits MCU activity, depending on the concentration of calcium. At low calcium levels, MICU1 occludes the pore of the MCU channel, preventing mitochondrial calcium uptake. At higher calcium levels, calcium-binding to MICU1 and MICU2 induces a conformational change that weakens MCU-MICU1 interactions and moves the MICU1-MICU2 heterodimer away from the pore, allowing calcium permeation through the MCU channel. The chain is Calcium uptake protein 2, mitochondrial from Mus musculus (Mouse).